Reading from the N-terminus, the 298-residue chain is Bifunctional protein FolD (298 aa).

Residues 167 to 169 (GRS), Ser192, and Val233 contribute to the NADP(+) site.

It belongs to the tetrahydrofolate dehydrogenase/cyclohydrolase family. Homodimer.

The enzyme catalyses (6R)-5,10-methylene-5,6,7,8-tetrahydrofolate + NADP(+) = (6R)-5,10-methenyltetrahydrofolate + NADPH. It catalyses the reaction (6R)-5,10-methenyltetrahydrofolate + H2O = (6R)-10-formyltetrahydrofolate + H(+). The protein operates within one-carbon metabolism; tetrahydrofolate interconversion. Functionally, catalyzes the oxidation of 5,10-methylenetetrahydrofolate to 5,10-methenyltetrahydrofolate and then the hydrolysis of 5,10-methenyltetrahydrofolate to 10-formyltetrahydrofolate. This chain is Bifunctional protein FolD, found in Chelativorans sp. (strain BNC1).